Reading from the N-terminus, the 37-residue chain is Esculentin-2P (37 aa).

C31 and C37 are oxidised to a cystine.

As to expression, expressed by the skin glands.

The protein resides in the secreted. Functionally, antibacterial activity against Gram-negative bacterium E.coli. This chain is Esculentin-2P, found in Lithobates pipiens (Northern leopard frog).